Reading from the N-terminus, the 207-residue chain is Ribosomal RNA small subunit methyltransferase G (207 aa).

S-adenosyl-L-methionine-binding positions include G76, Q81, 127 to 128 (VE), and R141.

It belongs to the methyltransferase superfamily. RNA methyltransferase RsmG family.

The protein resides in the cytoplasm. The catalysed reaction is guanosine(527) in 16S rRNA + S-adenosyl-L-methionine = N(7)-methylguanosine(527) in 16S rRNA + S-adenosyl-L-homocysteine. Functionally, specifically methylates the N7 position of guanine in position 527 of 16S rRNA. The chain is Ribosomal RNA small subunit methyltransferase G from Neisseria meningitidis serogroup C (strain 053442).